Consider the following 1819-residue polypeptide: Non-reducing polyketide synthase 8 (1819 aa).

A Starter acyltransferase (SAT) domain is found at 38–265; that stretch reads QLTLLSKQKQ…QKIINLPVYG (228 aa). Positions 405-840 constitute a Ketosynthase family 3 (KS3) domain; that stretch reads KSSIAIVGMS…GGNTMIAIEE (436 aa). Catalysis depends on for beta-ketoacyl synthase activity residues Cys578, His714, and His758. Residues 943-1262 enclose the Malonyl-CoA:ACP transacylase (MAT) domain; it reads FAFTGQGASY…SLSTLHCAGA (320 aa). Positions 1336–1476 are N-terminal hotdog fold; it reads QRIIEESFDG…GDRSAWLSSW (141 aa). One can recognise a PKS/mFAS DH domain in the interval 1336 to 1646; it reads QRIIEESFDG…FRQYPRILLN (311 aa). His1368 acts as the Proton acceptor; for dehydratase activity in catalysis. The interval 1404–1642 is dehydratase (DH) domain; it reads AMNVADLEVV…GGIKFRQYPR (239 aa). The tract at residues 1498–1646 is C-terminal hotdog fold; the sequence is IANRLSHNMA…FRQYPRILLN (149 aa). The active-site Proton donor; for dehydratase activity is Asp1557. Positions 1741–1818 constitute a Carrier domain; sequence VDTNSVASKA…DLRSWLMEYY (78 aa). Position 1778 is an O-(pantetheine 4'-phosphoryl)serine (Ser1778).

Pantetheine 4'-phosphate serves as cofactor.

The protein operates within secondary metabolite biosynthesis. In terms of biological role, non-reducing polyketide synthase; part of the gene cluster that mediates the biosynthesis of dibenzodioxocinones such as pestalotiollide B, a novel class of inhibitors against cholesterol ester transfer protein (CEPT). The biosynthesis initiates from condensation of acetate and malonate units catalyzed by the non-reducing PKS pks8/GME11356. Pks8/GME11356 lacks a thioesterase (TE) domain, which is important to the cyclizing of the third ring of atrochrysone carboxylic acid, and the esterase GME11355 might play the role of TE and catalyzes the cyclization reaction of the C ring. The lactamase-like protein GME11357 (or other beta-lactamases in Pestalotiopsis microspora) probably hydrolyzes the thioester bond between the ACP of pks8/GME11356 and the intermediate to release atrochrysone carboxylic acid, which is spontaneously dehydrates to form endocrocin anthrone. Endocrocin anthrone is further converted to emodin via the endocrocin intermediate. Emodin is then oxidized by several enzymes such as the Baeyer-Villiger oxidase GME11358, the oxidoreductase GME11367, the short chain dehydrogenase/reductase GME11373, as well as by other oxidoreductases from the cluster, to modify the A and C rings and open the B ring, and finally yield monodictyphenone. The prenyltransferase GME11375 may catalyze the addition reaction between the C5 side chains and the carbon bone of dibenzodioxocinones. The remaining biochemical reactions to the final product dibenzodioxocinones should be methylation catalyzed by methyltransferase GME11366 and reduction and lactonization reaction catalyzed by a series of oxidordeuctases. This Pestalotiopsis microspora protein is Non-reducing polyketide synthase 8.